The following is a 532-amino-acid chain: NMDA receptor synaptonuclear signaling and neuronal migration factor (532 aa).

Glycine 2 carries the N-myristoyl glycine lipid modification. The necessary and sufficient to elicit dendritic processes and synaptic contacts stretch occupies residues 2 to 235 (GAAASRRRAL…FSFQTATTTM (234 aa)). Disordered regions lie at residues 34-67 (SQSHPENRNGADHLLADAYSGHEGSPEMQPAPHN) and 127-174 (RRQR…GCAK). A compositionally biased stretch (basic and acidic residues) spans 38-48 (PENRNGADHLL). Over residues 127–139 (RRQRERHPHHHSQ) the composition is skewed to basic residues. The span at 155–164 (PCQSWAGSRQ) shows a compositional bias: polar residues. Serine 206 carries the post-translational modification Phosphoserine. A Nuclear localization signal motif is present at residues 247-252 (RKRRKR). The segment at 275 to 315 (RVKAQTFAERRERSFSRSWSDPTPMKADTSHDSRDSSDLQS) is disordered. Serine 292 and serine 294 each carry phosphoserine. Residues 302 to 311 (DTSHDSRDSS) show a composition bias toward basic and acidic residues.

This sequence belongs to the NSMF family. In terms of assembly, interacts with KPNA1; the interaction occurs in a calcium-independent manner after synaptic NMDA receptor stimulation and is required for nuclear import of NSMF but is competed by CABP1. Interacts (via the central NLS-containing motif region) with CABP1 (via EF-hands 1 and 2); the interaction occurs in a calcium-dependent manner after synaptic NMDA receptor stimulation and prevents the nuclear import of NSMF. Cannot be competed by calmodulin. Proteolytically processed after NMDA receptor activation. Cleaved in a calcium-dependent and calpain-sensitive manner. Calpain cleavage is essential for the translocation process from dendrites to the nucleus. Expressed in the radiatum and pyramidale strata of the hippocampus (at protein level). Strongly expressed in the brain. Expressed in the sensory and motor cortex, hippocampus, olfactory bulb, thalamus and amygdala. In the olfactory bulb expressed in the granular cell layer, mitral cell layer and the glomerular layer. In the hippocampus highly expressed in the regions associated with neuronal cell types as CA1, CA2, CA3 and granule cells of the dentate gyrus. All isoforms have been detected in the molecular layers of the hippocampus.

The protein localises to the nucleus. It is found in the nucleus envelope. The protein resides in the nucleus membrane. It localises to the nucleus matrix. Its subcellular location is the cytoplasm. The protein localises to the cell cortex. It is found in the cytoskeleton. The protein resides in the cell membrane. It localises to the cell projection. Its subcellular location is the dendrite. The protein localises to the synapse. It is found in the synaptosome. The protein resides in the postsynaptic density. It localises to the membrane. Its function is as follows. Couples NMDA-sensitive glutamate receptor signaling to the nucleus and triggers long-lasting changes in the cytoarchitecture of dendrites and spine synapse processes. Part of the cAMP response element-binding protein (CREB) shut-off signaling pathway. Stimulates outgrowth of olfactory axons and migration of gonadotropin-releasing hormone (GnRH) and luteinizing-hormone-releasing hormone (LHRH) neuronal cells. This chain is NMDA receptor synaptonuclear signaling and neuronal migration factor (Nsmf), found in Rattus norvegicus (Rat).